Reading from the N-terminus, the 234-residue chain is Large ribosomal subunit protein uL1 (234 aa).

This sequence belongs to the universal ribosomal protein uL1 family. As to quaternary structure, part of the 50S ribosomal subunit.

In terms of biological role, binds directly to 23S rRNA. The L1 stalk is quite mobile in the ribosome, and is involved in E site tRNA release. Protein L1 is also a translational repressor protein, it controls the translation of the L11 operon by binding to its mRNA. In Prochlorococcus marinus (strain SARG / CCMP1375 / SS120), this protein is Large ribosomal subunit protein uL1.